A 429-amino-acid chain; its full sequence is Autophagy-related protein 18 (429 aa).

7 WD repeats span residues 1 to 36 (MAMN…KSYE), 69 to 114 (KRQS…LLYT), 139 to 182 (PLPQ…AINV), 185 to 225 (AHRS…KLYQ), 230 to 269 (SMPS…SSPD), 309 to 355 (KHNG…AWFK), and 367 to 407 (VNNG…GGEG). A L/FRRG motif motif is present at residues 226–230 (FRRGS). Over residues 262–275 (SHPTSSPDASPSSP) the composition is skewed to low complexity. The segment at 262–308 (SHPTSSPDASPSSPVGRDRSLSQSSSGYSPDRGDLTGDVGSSDFPAR) is disordered.

It belongs to the WD repeat PROPPIN family. As to quaternary structure, component of the PI(3,5)P2 regulatory complex.

The protein localises to the preautophagosomal structure membrane. The protein resides in the vacuole membrane. It localises to the endosome membrane. Functionally, the PI(3,5)P2 regulatory complex regulates both the synthesis and turnover of phosphatidylinositol 3,5-bisphosphate (PtdIns(3,5)P2). Necessary for proper vacuole morphology. Plays an important role in osmotically-induced vacuole fragmentation. Required for cytoplasm to vacuole transport (Cvt) vesicle formation, pexophagy and starvation-induced autophagy. Involved in correct atg9 trafficking to the pre-autophagosomal structure. Might also be involved in premeiotic DNA replication. The sequence is that of Autophagy-related protein 18 (atg18) from Neosartorya fischeri (strain ATCC 1020 / DSM 3700 / CBS 544.65 / FGSC A1164 / JCM 1740 / NRRL 181 / WB 181) (Aspergillus fischerianus).